Here is a 189-residue protein sequence, read N- to C-terminus: Probable nicotinate-nucleotide adenylyltransferase (189 aa).

The protein belongs to the NadD family.

The catalysed reaction is nicotinate beta-D-ribonucleotide + ATP + H(+) = deamido-NAD(+) + diphosphate. It participates in cofactor biosynthesis; NAD(+) biosynthesis; deamido-NAD(+) from nicotinate D-ribonucleotide: step 1/1. Functionally, catalyzes the reversible adenylation of nicotinate mononucleotide (NaMN) to nicotinic acid adenine dinucleotide (NaAD). This is Probable nicotinate-nucleotide adenylyltransferase from Staphylococcus aureus (strain N315).